The sequence spans 463 residues: MAIAENYEDVLKGKYPAKAHAKKVAEWIIAKGGDKNGTIYLEAQKQKLNEDNDGEAPFRQRRYFFYLSGCELPDSYLTYEIATEKLTLFIPPVEPDEVIWSGLPMSPEDAKAKYDIDHCLTTKDVNAHLTSTSESAQSTIYAIPEQVSDHVTFISYKEKEFKQLKPAIEYCRVTKSDYEIALIRKANMISTAAHEAVMKAASTAKNECELEAVFLKACVERNAKNQAYHSIVAAGEHAATLHYVHNAAPISDQNLLLLDAGCEVDCYASDITRTFPLKGKFTAESLAIYKIVLDMQHQCINALKEGVVWDSVHELAHKVAIKGLLELGILKGDAEEIFTKRISVAFFPHGLGHYLGMDTHDTGGNANYADKDVMFRYLRTRGSLPERSVITVEPGVYFCRFIIEPYLKDEEKKKYIDESVLERYWSVGGVRIEDNVLVTKNGFENLTPTPKEIDDITKLILST.

4 residues coordinate Mn(2+): Asp-259, Asp-270, Glu-393, and Glu-433.

It belongs to the peptidase M24B family. Requires Mn(2+) as cofactor.

It carries out the reaction Release of any N-terminal amino acid, including proline, that is linked to proline, even from a dipeptide or tripeptide.. Its function is as follows. Catalyzes the removal of a penultimate prolyl residue from the N-termini of peptides. The sequence is that of Probable Xaa-Pro aminopeptidase pepP (pepP) from Pyrenophora teres f. teres (strain 0-1) (Barley net blotch fungus).